The sequence spans 251 residues: 2,3-bisphosphoglycerate-dependent phosphoglycerate mutase (251 aa).

Substrate contacts are provided by residues 8 to 15 (RHGESLWN), 21 to 22 (TG), Arg60, 87 to 90 (ERHY), Lys98, 114 to 115 (RR), and 183 to 184 (GN). The active-site Tele-phosphohistidine intermediate is the His9. Residue Glu87 is the Proton donor/acceptor of the active site.

Belongs to the phosphoglycerate mutase family. BPG-dependent PGAM subfamily.

The catalysed reaction is (2R)-2-phosphoglycerate = (2R)-3-phosphoglycerate. The protein operates within carbohydrate degradation; glycolysis; pyruvate from D-glyceraldehyde 3-phosphate: step 3/5. Catalyzes the interconversion of 2-phosphoglycerate and 3-phosphoglycerate. This chain is 2,3-bisphosphoglycerate-dependent phosphoglycerate mutase, found in Thermoanaerobacter pseudethanolicus (strain ATCC 33223 / 39E) (Clostridium thermohydrosulfuricum).